A 365-amino-acid chain; its full sequence is Protein RecA (365 aa).

73-80 (GPESSGKT) provides a ligand contact to ATP.

The protein belongs to the RecA family.

Its subcellular location is the cytoplasm. Its function is as follows. Can catalyze the hydrolysis of ATP in the presence of single-stranded DNA, the ATP-dependent uptake of single-stranded DNA by duplex DNA, and the ATP-dependent hybridization of homologous single-stranded DNAs. It interacts with LexA causing its activation and leading to its autocatalytic cleavage. The chain is Protein RecA from Prochlorococcus marinus (strain MIT 9301).